A 370-amino-acid chain; its full sequence is MTLSKWILSFGLSVCLIVSHPVSAERIKDLANIQGVRANQLIGYGLVVGLDGTGDQTQQTPFTVQSILSMLGQLGVNLPPGTNLQLRNVASVMVTATLPAFAKPGQQIDVTVSSMGNAKSLRGGTLLMTPLKGIDNQVYAVAQGSLVIGGAGASSAGSSVQINHLGAGRISAGAIVERAVPTVLGQGEYINLELRDTDFTTARRIVDTINSRFSYGTATALDGRVIQLRAPLNNNQRVTFISQIEDLDVIPAQGIAKVIINARTGSVVMNQMVTLESSAVAHGNLSVIINTQPIVSQPGPFAQRGETVVVPQSQIEVRSEEGNLMLLPGSASLADVVKALNAIGATPQDLLAILQALKASGSLRAELEII.

The first 24 residues, 1–24 (MTLSKWILSFGLSVCLIVSHPVSA), serve as a signal peptide directing secretion.

It belongs to the FlgI family. The basal body constitutes a major portion of the flagellar organelle and consists of four rings (L,P,S, and M) mounted on a central rod.

The protein resides in the periplasm. Its subcellular location is the bacterial flagellum basal body. In terms of biological role, assembles around the rod to form the L-ring and probably protects the motor/basal body from shearing forces during rotation. The sequence is that of Flagellar P-ring protein from Nitrosomonas europaea (strain ATCC 19718 / CIP 103999 / KCTC 2705 / NBRC 14298).